The primary structure comprises 531 residues: Protein tweety homolog 2-like (531 aa).

Over 1–44 (MASSRQDYIAPWWTYWLHNFPHLNFNFQTVDNTFKPEDASYQQS) the chain is Extracellular. A helical transmembrane segment spans residues 45 to 65 (LVFLACVSAVALGLCLLLLSV). At 66-87 (YLTCLCCCRREEDEEVKRPDTC) the chain is on the cytoplasmic side. The helical transmembrane segment at 88–108 (CVTWAAVITGLVICSAVGVGF) threads the bilayer. Topologically, residues 109–213 (YGNSETNDGV…RTAFIEYYRW (105 aa)) are extracellular. Asn129 carries an N-linked (GlcNAc...) asparagine glycan. A helical transmembrane segment spans residues 214-234 (LTYLLLLILDLVICLLACLAL). Residues 235–239 (AKQSR) lie on the Cytoplasmic side of the membrane. The chain crosses the membrane as a helical span at residues 240 to 260 (WLLTVIMVCGMLTLIMSWASL). The Extracellular portion of the chain corresponds to 261–389 (GAGTATAVGT…GVCYDGVEGL (129 aa)). Residues Asn283 and Asn352 are each glycosylated (N-linked (GlcNAc...) asparagine). Residues 390-410 (LYLCLFSLLAACAFCALLCAV) form a helical membrane-spanning segment. The Cytoplasmic portion of the chain corresponds to 411-531 (PRAWMLIAIR…IRHFGTDFQV (121 aa)).

This sequence belongs to the tweety family.

It is found in the cell membrane. Its function is as follows. Probable large-conductance Ca(2+)-activated chloride channel. The polypeptide is Protein tweety homolog 2-like (ttyh2l) (Danio rerio (Zebrafish)).